The chain runs to 362 residues: Chalcone synthase A (362 aa).

Residue C168 is part of the active site.

Belongs to the thiolase-like superfamily. Chalcone/stilbene synthases family.

It catalyses the reaction (E)-4-coumaroyl-CoA + 3 malonyl-CoA + 3 H(+) = 2',4,4',6'-tetrahydroxychalcone + 3 CO2 + 4 CoA. It functions in the pathway secondary metabolite biosynthesis; flavonoid biosynthesis. In terms of biological role, the primary product of this enzyme is 4,2',4',6'-tetrahydroxychalcone (also termed naringenin-chalcone or chalcone) which can under specific conditions spontaneously isomerize into naringenin. The chain is Chalcone synthase A (CHSA) from Ipomoea triloba (Trilobed morning glory).